The primary structure comprises 176 residues: MFLIITRDTMFFTAMKNILSKGNVVHIQNEEEIDVMLHQNAFVIIDTLMNNVFHSNFLTQIERLKPVHVIIFSPFNIKRCLGKVPVTFVPRTIAIIDFVALINGSYCSVPEADVSLSRKQHQVLSCIANQMTTEDILEKLKISLKTFYCHKHNIMMILNLKRINELVRHQHINYLV.

The region spanning 109–174 is the HTH luxR-type domain; the sequence is VPEADVSLSR…ELVRHQHINY (66 aa). A DNA-binding region (H-T-H motif) is located at residues 133–152; that stretch reads TEDILEKLKISLKTFYCHKH.

Its function is as follows. May act as a transcriptional regulator of dctA. The sequence is that of HTH-type transcriptional regulator DctR (dctR) from Escherichia coli O6:H1 (strain CFT073 / ATCC 700928 / UPEC).